We begin with the raw amino-acid sequence, 373 residues long: UDP-N-acetylglucosamine--N-acetylmuramyl-(pentapeptide) pyrophosphoryl-undecaprenol N-acetylglucosamine transferase (373 aa).

UDP-N-acetyl-alpha-D-glucosamine is bound by residues 10 to 12 (TGG), Asn124, Ser195, and Gln297.

This sequence belongs to the glycosyltransferase 28 family. MurG subfamily.

It is found in the cell membrane. The enzyme catalyses Mur2Ac(oyl-L-Ala-gamma-D-Glu-L-Lys-D-Ala-D-Ala)-di-trans,octa-cis-undecaprenyl diphosphate + UDP-N-acetyl-alpha-D-glucosamine = beta-D-GlcNAc-(1-&gt;4)-Mur2Ac(oyl-L-Ala-gamma-D-Glu-L-Lys-D-Ala-D-Ala)-di-trans,octa-cis-undecaprenyl diphosphate + UDP + H(+). It participates in cell wall biogenesis; peptidoglycan biosynthesis. In terms of biological role, cell wall formation. Catalyzes the transfer of a GlcNAc subunit on undecaprenyl-pyrophosphoryl-MurNAc-pentapeptide (lipid intermediate I) to form undecaprenyl-pyrophosphoryl-MurNAc-(pentapeptide)GlcNAc (lipid intermediate II). The protein is UDP-N-acetylglucosamine--N-acetylmuramyl-(pentapeptide) pyrophosphoryl-undecaprenol N-acetylglucosamine transferase of Oenococcus oeni (strain ATCC BAA-331 / PSU-1).